A 109-amino-acid polypeptide reads, in one-letter code: Thioredoxin-like protein slr1139 (109 aa).

The region spanning 2–107 (SLLEITDAEF…LLELLKEELD (106 aa)) is the Thioredoxin domain. Residues cysteine 31 and cysteine 34 are joined by a disulfide bond.

Belongs to the thioredoxin family.

The protein is Thioredoxin-like protein slr1139 of Synechocystis sp. (strain ATCC 27184 / PCC 6803 / Kazusa).